Consider the following 652-residue polypeptide: Phosphomethylpyrimidine synthase (652 aa).

Disordered stretches follow at residues 1–45 (MVSR…SVSA) and 118–166 (QRGD…LDGR). A compositionally biased stretch (low complexity) spans 8-45 (SSSSTSKAVTSSPSTSSLSSAASSPSVSSSSSSSSVSA). A compositionally biased stretch (gly residues) spans 134 to 162 (GASGPGTLGSGTPGSGTPGSGPLGLGGTD). Residues Asn-245, Met-274, Tyr-303, His-339, 359-361 (SRG), 400-403 (DGLR), and Glu-439 contribute to the substrate site. His-443 serves as a coordination point for Zn(2+). Tyr-466 is a binding site for substrate. His-507 contacts Zn(2+). Residues Cys-587, Cys-590, and Cys-595 each coordinate [4Fe-4S] cluster.

The protein belongs to the ThiC family. The cofactor is [4Fe-4S] cluster.

It carries out the reaction 5-amino-1-(5-phospho-beta-D-ribosyl)imidazole + S-adenosyl-L-methionine = 4-amino-2-methyl-5-(phosphooxymethyl)pyrimidine + CO + 5'-deoxyadenosine + formate + L-methionine + 3 H(+). Its pathway is cofactor biosynthesis; thiamine diphosphate biosynthesis. Functionally, catalyzes the synthesis of the hydroxymethylpyrimidine phosphate (HMP-P) moiety of thiamine from aminoimidazole ribotide (AIR) in a radical S-adenosyl-L-methionine (SAM)-dependent reaction. The protein is Phosphomethylpyrimidine synthase of Frankia casuarinae (strain DSM 45818 / CECT 9043 / HFP020203 / CcI3).